The sequence spans 2053 residues: Integrator complex subunit 1 (2053 aa).

2 disordered regions span residues 36–58 and 249–285; these read KILP…ALAS and SLPS…ESEP. Residues 268–283 show a composition bias toward polar residues; the sequence is DNSTQSLDASPLNTES. The helical transmembrane segment at 708–728 threads the bilayer; the sequence is LAIIAFYWKAWLILLMISAHN.

It belongs to the Integrator subunit 1 family. As to quaternary structure, belongs to the multiprotein complex Integrator, at least composed of IntS1, IntS2, IntS3, IntS4, omd/IntS5, IntS6, defl/IntS7, IntS8, IntS9, IntS10, IntS11, IntS12, asun/IntS13, IntS14 and IntS15. The core complex associates with protein phosphatase 2A subunits mts/PP2A and Pp2A-29B, to form the Integrator-PP2A (INTAC) complex. Within the complex, interacts with IntS12 and IntS9. Interaction with IntS12 is likely to be important for promoting 3'-end processing of snRNAs. Interacts with Mediator complex members Cdk8 and CycC.

It localises to the nucleus membrane. The protein resides in the nucleus. Component of the integrator complex, a multiprotein complex that terminates RNA polymerase II (Pol II) transcription in the promoter-proximal region of genes. The integrator complex provides a quality checkpoint during transcription elongation by driving premature transcription termination of transcripts that are unfavorably configured for transcriptional elongation: the complex terminates transcription by (1) catalyzing dephosphorylation of the C-terminal domain (CTD) of Pol II subunit Polr2A/Rbp1 and Spt5, and (2) degrading the exiting nascent RNA transcript via endonuclease activity. The integrator complex is also involved in the 3'-end processing of the U7 snRNA, and also the spliceosomal snRNAs U1, U2, U4 and U5. Required for the normal expression of the Integrator complex component IntS12. The chain is Integrator complex subunit 1 from Drosophila melanogaster (Fruit fly).